Reading from the N-terminus, the 604-residue chain is Proline--tRNA ligase (604 aa).

Belongs to the class-II aminoacyl-tRNA synthetase family. ProS type 1 subfamily. As to quaternary structure, homodimer.

It is found in the cytoplasm. The catalysed reaction is tRNA(Pro) + L-proline + ATP = L-prolyl-tRNA(Pro) + AMP + diphosphate. Catalyzes the attachment of proline to tRNA(Pro) in a two-step reaction: proline is first activated by ATP to form Pro-AMP and then transferred to the acceptor end of tRNA(Pro). As ProRS can inadvertently accommodate and process non-cognate amino acids such as alanine and cysteine, to avoid such errors it has two additional distinct editing activities against alanine. One activity is designated as 'pretransfer' editing and involves the tRNA(Pro)-independent hydrolysis of activated Ala-AMP. The other activity is designated 'posttransfer' editing and involves deacylation of mischarged Ala-tRNA(Pro). The misacylated Cys-tRNA(Pro) is not edited by ProRS. The chain is Proline--tRNA ligase from Nostoc punctiforme (strain ATCC 29133 / PCC 73102).